A 794-amino-acid polypeptide reads, in one-letter code: E3 ubiquitin-protein ligase wwp-1 (794 aa).

Residues 1–16 (MARNEPSSQQPSSSGS) show a composition bias toward low complexity. Disordered regions lie at residues 1–31 (MARN…KPSK) and 155–198 (RSAG…AAPT). Positions 10–124 (QPSSSGSNGT…TRNENGEFKN (115 aa)) constitute a C2 domain. Residues 17-27 (NGTPAQQNGSA) show a composition bias toward polar residues. Over residues 161–186 (AETAASASSEASTSNGVATSSSARRP) the composition is skewed to low complexity. 4 WW domains span residues 219–252 (EQLP…RPST), 253–286 (QPLP…RPTA), 324–358 (GPLP…DPRT), and 366–399 (QPLP…DPRT). Residues 460–794 (NAVDLRRRLY…IEMTEGFGNE (335 aa)) form the HECT domain. The active-site Glycyl thioester intermediate is the Cys762.

In terms of assembly, interacts (via WW domains) with Kruppel-like factor klf-1. Interacts with ubiquitin-conjugating enzyme E2 ubc-18. As to expression, expressed in neurons localized in the head and tail of adults.

It catalyses the reaction S-ubiquitinyl-[E2 ubiquitin-conjugating enzyme]-L-cysteine + [acceptor protein]-L-lysine = [E2 ubiquitin-conjugating enzyme]-L-cysteine + N(6)-ubiquitinyl-[acceptor protein]-L-lysine.. It functions in the pathway protein modification; protein ubiquitination. E3 ubiquitin-protein ligase which accepts ubiquitin from an E2 ubiquitin-conjugating enzyme in the form of a thioester and then directly transfers the ubiquitin to targeted substrates. Ubiquitinates klf-1. Required for diet restriction-mediated lifespan extension, acting in concert with Kruppel-like factor klf-1 in the intestine to perhaps modulate genes involved in lipid metabolism. Probably acting downstream of the Insulin/IGF-1-like signaling (IIS) mediated pathway, plays a role in the immune response to infection by the Gram-negative bacterium P.aeruginosa, at least partly in response to bacterial pore-forming toxins. The polypeptide is E3 ubiquitin-protein ligase wwp-1 (Caenorhabditis elegans).